Here is a 547-residue protein sequence, read N- to C-terminus: CTP synthase (547 aa).

The interval 1 to 265 is amidoligase domain; the sequence is MTKFVFVTGG…DRIVCEKLAL (265 aa). Serine 13 is a binding site for CTP. Residue serine 13 participates in UTP binding. Residues 14–19 and aspartate 71 each bind ATP; that span reads SLGKGI. Aspartate 71 and glutamate 139 together coordinate Mg(2+). Residues 146 to 148, 186 to 191, and lysine 222 contribute to the CTP site; these read DIE and KTKPTQ. UTP contacts are provided by residues 186-191 and lysine 222; that span reads KTKPTQ. The region spanning 290-542 is the Glutamine amidotransferase type-1 domain; it reads TIGMVGKYVD…IKAALAHKHA (253 aa). Glycine 351 lines the L-glutamine pocket. Cysteine 378 acts as the Nucleophile; for glutamine hydrolysis in catalysis. L-glutamine contacts are provided by residues 379–382, glutamate 402, and arginine 468; that span reads LGMQ. Active-site residues include histidine 515 and glutamate 517.

Belongs to the CTP synthase family. Homotetramer.

It catalyses the reaction UTP + L-glutamine + ATP + H2O = CTP + L-glutamate + ADP + phosphate + 2 H(+). The enzyme catalyses L-glutamine + H2O = L-glutamate + NH4(+). The catalysed reaction is UTP + NH4(+) + ATP = CTP + ADP + phosphate + 2 H(+). It functions in the pathway pyrimidine metabolism; CTP biosynthesis via de novo pathway; CTP from UDP: step 2/2. Its activity is regulated as follows. Allosterically activated by GTP, when glutamine is the substrate; GTP has no effect on the reaction when ammonia is the substrate. The allosteric effector GTP functions by stabilizing the protein conformation that binds the tetrahedral intermediate(s) formed during glutamine hydrolysis. Inhibited by the product CTP, via allosteric rather than competitive inhibition. Functionally, catalyzes the ATP-dependent amination of UTP to CTP with either L-glutamine or ammonia as the source of nitrogen. Regulates intracellular CTP levels through interactions with the four ribonucleotide triphosphates. In Janthinobacterium sp. (strain Marseille) (Minibacterium massiliensis), this protein is CTP synthase.